Reading from the N-terminus, the 431-residue chain is COBRA-like protein 4 (431 aa).

An N-terminal signal peptide occupies residues 1–20 (MRLLFSFCFFFFMIIFTATA). 8 N-linked (GlcNAc...) asparagine glycosylation sites follow: Asn-29, Asn-154, Asn-162, Asn-201, Asn-226, Asn-306, Asn-321, and Asn-340. Asn-414 is lipidated: GPI-anchor amidated asparagine. Residues 415–431 (FASFSLTILLLLFISIW) constitute a propeptide, removed in mature form.

The protein belongs to the COBRA family. Expressed in roots, stems, leaves, flowers and siliques.

The protein resides in the cell membrane. The sequence is that of COBRA-like protein 4 (COBL4) from Arabidopsis thaliana (Mouse-ear cress).